Consider the following 501-residue polypeptide: Iroquois-class homeodomain protein IRX-3 (501 aa).

The homeobox; TALE-type DNA-binding region spans 125–188; it reads FGDPSRPKNA…ANARRRLKKE (64 aa). The interval 190–381 is disordered; sequence KMTWAPRSRT…SPPGAAVAPS (192 aa). Acidic residues-rich tracts occupy residues 210-220 and 227-258; these read REEEDEEEDEE and ELEE…DLEN. 2 positions are modified to phosphoserine: S323 and S326. Residues 324-339 show a composition bias toward pro residues; it reads LPSPPVSLDPCAPAPA.

The protein belongs to the TALE/IRO homeobox family.

The protein resides in the nucleus. In terms of biological role, transcription factor involved in SHH-dependent neural patterning. Together with NKX2-2 and NKX6-1 acts to restrict the generation of motor neurons to the appropriate region of the neural tube. Belongs to the class I proteins of neuronal progenitor factors, which are repressed by SHH signals. Involved in the transcriptional repression of MNX1 in non-motor neuron cells. Acts as a regulator of energy metabolism. In Homo sapiens (Human), this protein is Iroquois-class homeodomain protein IRX-3 (IRX3).